We begin with the raw amino-acid sequence, 1028 residues long: Multidrug resistance protein MdtC (1028 aa).

The next 12 membrane-spanning stretches (helical) occupy residues 3–23, 333–353, 360–380, 387–407, 431–451, 463–483, 528–548, 853–873, 875–895, 897–917, 953–973, and 984–1004; these read FFAL…AITL, EVEQ…FLFL, LIPA…MYLC, LSLM…IVVL, VGFT…PLLL, FAVT…TLTP, LVGV…ISIP, VILI…LYES, VHPL…LLAL, LFNA…IGIV, PIMM…ISGG, and ITIV…TPVV.

It belongs to the resistance-nodulation-cell division (RND) (TC 2.A.6) family. MdtC subfamily. As to quaternary structure, part of a tripartite efflux system composed of MdtA, MdtB and MdtC. MdtC forms a heteromultimer with MdtB.

The protein localises to the cell inner membrane. The protein is Multidrug resistance protein MdtC of Citrobacter koseri (strain ATCC BAA-895 / CDC 4225-83 / SGSC4696).